Here is a 441-residue protein sequence, read N- to C-terminus: MHPSDQTIFALATGPLPSAIAIVRVSGSRAGEVLTALTGSLPPPRRAVRCDLRSRDGDLIDDGVALWFPTPASATGEDVAELHIHGSRAVAAALIKTLSAFEGVRPAEPGEFTRRGFENGKLDLTEAEGLDDLIHADTDAQRRQALRQLGGVLGDRARRWRDQIIEALALVEAGIDFSDEGDVADELMGPARAKIAELSAEIAEVLAEQGRGEKLRDGMVVAIAGPPNVGKSTLINRLARREVAIVSPHAGTTRDVIEIQLDLDGYPVTVIDTAGLRDSDDPVEQEGVRRARSRAAAADLVLWLSTATDASDPDVKGPEVWRVRNKIDLATGEVAESGPSQPVFRISAATGEGFADLLRELTRFAAQYFGSAEAGLITRDRHRRLLADAAASLTRSLVPGLAEEIVAEELRASAHSLGRLLGRVDVEDVLGEIFGRFCIGK.

(6S)-5-formyl-5,6,7,8-tetrahydrofolate is bound by residues arginine 24, glutamate 81, and lysine 121. The 149-residue stretch at 218–366 (GMVVAIAGPP…LLRELTRFAA (149 aa)) folds into the TrmE-type G domain. GTP contacts are provided by residues 228 to 233 (NVGKST), 247 to 253 (SPHAGTT), and 272 to 275 (DTAG). Mg(2+) contacts are provided by serine 232 and threonine 253. Lysine 441 provides a ligand contact to (6S)-5-formyl-5,6,7,8-tetrahydrofolate.

It belongs to the TRAFAC class TrmE-Era-EngA-EngB-Septin-like GTPase superfamily. TrmE GTPase family. In terms of assembly, homodimer. Heterotetramer of two MnmE and two MnmG subunits. It depends on K(+) as a cofactor.

It localises to the cytoplasm. Functionally, exhibits a very high intrinsic GTPase hydrolysis rate. Involved in the addition of a carboxymethylaminomethyl (cmnm) group at the wobble position (U34) of certain tRNAs, forming tRNA-cmnm(5)s(2)U34. This Rhodopseudomonas palustris (strain ATCC BAA-98 / CGA009) protein is tRNA modification GTPase MnmE.